A 114-amino-acid polypeptide reads, in one-letter code: Hydrogenase maturation factor HypA (114 aa).

His-2 provides a ligand contact to Ni(2+). Cys-73, Cys-76, Cys-90, and Cys-93 together coordinate Zn(2+).

This sequence belongs to the HypA/HybF family.

Functionally, involved in the maturation of [NiFe] hydrogenases. Required for nickel insertion into the metal center of the hydrogenase. This chain is Hydrogenase maturation factor HypA, found in Chloroflexus aggregans (strain MD-66 / DSM 9485).